A 156-amino-acid chain; its full sequence is FUN14 domain-containing protein 1 (156 aa).

Residues 19–22 (YEVL) carry the YXXL motif. The next 3 helical transmembrane spans lie at 49–69 (YSVA…GFLF), 76–96 (AATA…SGYV), and 135–155 (FIKQ…LGLA).

This sequence belongs to the FUN14 family.

The protein localises to the mitochondrion outer membrane. Its function is as follows. Acts as an activator of hypoxia-induced mitophagy, an important mechanism for mitochondrial quality control. The protein is FUN14 domain-containing protein 1 (FUNDC1) of Gallus gallus (Chicken).